We begin with the raw amino-acid sequence, 100 residues long: Small ribosomal subunit protein uS14 (100 aa).

The protein belongs to the universal ribosomal protein uS14 family. Part of the 30S ribosomal subunit. Contacts proteins S3 and S10.

Functionally, binds 16S rRNA, required for the assembly of 30S particles and may also be responsible for determining the conformation of the 16S rRNA at the A site. The chain is Small ribosomal subunit protein uS14 from Prochlorococcus marinus (strain MIT 9301).